The chain runs to 492 residues: N-succinylglutamate 5-semialdehyde dehydrogenase (492 aa).

Position 220–225 (220–225) interacts with NAD(+); that stretch reads GRANTG. Catalysis depends on residues Glu243 and Cys277.

Belongs to the aldehyde dehydrogenase family. AstD subfamily.

The enzyme catalyses N-succinyl-L-glutamate 5-semialdehyde + NAD(+) + H2O = N-succinyl-L-glutamate + NADH + 2 H(+). It participates in amino-acid degradation; L-arginine degradation via AST pathway; L-glutamate and succinate from L-arginine: step 4/5. Catalyzes the NAD-dependent reduction of succinylglutamate semialdehyde into succinylglutamate. In Shigella boydii serotype 18 (strain CDC 3083-94 / BS512), this protein is N-succinylglutamate 5-semialdehyde dehydrogenase.